The following is a 549-amino-acid chain: MAAKDVIFGGEARARMVEGVNILANAVKVTLGPKGRNVVLERSFGAPTVTKDGVSVAKEIELKDKLQNMGAQMVKEVASKTSDIAGDGTTTATVLAQAIVHEGMKYVAAGMNPMDLKRGIDKAVHALVEELKKASKATTTSKEIAQVGSISANSDETIGKIIADAMDKVGKEGVITVEDGKSLESELDVVEGMQFDRGYLSPYFINNPEKQSALLDNPFVLLYDKKISNIRDLLPTLEQVAKAGRPLLIIAEEVEGEALATLVVNTLRGILKVVAVKAPGFGDRRKAMLEDIAVLTGGKVIAEEVGMSLEKVTLADLGQAKRIEVGKENTIIIDGSGEAADIEARVKQVRVQIEEATSDYDREKLQERVAKLAGGVAVIKVGAATEVEMKEKKARVEDALHATRAAVEEGIVAGGGVALLRAKQTAGVIKGDNADQDAGIKLVLRAIEAPLREIVYNAGGEASVVVNAVLAGTGNYGFNAANDTYGDMIEMGILDPTKVTRTALQNAASVASLMLTTECMVCESAKDDAPAGGMGGGMGGMGGMGDMGM.

Residues threonine 30–proline 33, lysine 51, aspartate 87–threonine 91, glycine 415, asparagine 479–alanine 481, and aspartate 495 contribute to the ATP site.

The protein belongs to the chaperonin (HSP60) family. As to quaternary structure, forms a cylinder of 14 subunits composed of two heptameric rings stacked back-to-back. Interacts with the co-chaperonin GroES.

The protein resides in the cytoplasm. The enzyme catalyses ATP + H2O + a folded polypeptide = ADP + phosphate + an unfolded polypeptide.. In terms of biological role, together with its co-chaperonin GroES, plays an essential role in assisting protein folding. The GroEL-GroES system forms a nano-cage that allows encapsulation of the non-native substrate proteins and provides a physical environment optimized to promote and accelerate protein folding. The chain is Chaperonin GroEL 2 from Polaromonas naphthalenivorans (strain CJ2).